The following is a 399-amino-acid chain: S-adenosylmethionine synthase (399 aa).

His16 lines the ATP pocket. Residue Asp18 participates in Mg(2+) binding. Residue Glu44 coordinates K(+). 2 residues coordinate L-methionine: Glu57 and Gln100. The flexible loop stretch occupies residues 100-110 (QSPDIAQGVDD). Residues 174-176 (DAK), 241-242 (RF), Asp250, 256-257 (RK), Ala273, and Lys277 each bind ATP. Asp250 is a binding site for L-methionine. L-methionine is bound at residue Lys281.

This sequence belongs to the AdoMet synthase family. As to quaternary structure, homotetramer; dimer of dimers. The cofactor is Mg(2+). It depends on K(+) as a cofactor.

The protein resides in the cytoplasm. It catalyses the reaction L-methionine + ATP + H2O = S-adenosyl-L-methionine + phosphate + diphosphate. The protein operates within amino-acid biosynthesis; S-adenosyl-L-methionine biosynthesis; S-adenosyl-L-methionine from L-methionine: step 1/1. Functionally, catalyzes the formation of S-adenosylmethionine (AdoMet) from methionine and ATP. The overall synthetic reaction is composed of two sequential steps, AdoMet formation and the subsequent tripolyphosphate hydrolysis which occurs prior to release of AdoMet from the enzyme. The protein is S-adenosylmethionine synthase of Latilactobacillus sakei subsp. sakei (strain 23K) (Lactobacillus sakei subsp. sakei).